The primary structure comprises 111 residues: Cytochrome c6-like (111 aa).

A signal peptide spans 1 to 25; the sequence is MQKFLKLVLVTFLFLISTLTPPANA. The heme c site is built by cysteine 39, cysteine 42, histidine 43, and methionine 83.

It belongs to the cytochrome c family. PetJ subfamily. Binds 1 heme c group covalently per subunit.

It localises to the cellular thylakoid lumen. This chain is Cytochrome c6-like, found in Nostoc sp. (strain PCC 7120 / SAG 25.82 / UTEX 2576).